Consider the following 312-residue polypeptide: Protoheme IX farnesyltransferase 2 (312 aa).

8 consecutive transmembrane segments (helical) span residues 31-51, 52-72, 119-139, 152-172, 179-199, 225-245, 247-267, and 283-303; these read VMSLVIFTALVGLMIAPGHIH, PVLGFIAILCIAVGAGASGAL, ALVNWYAGGLLAFTIFFYVVI, IVIGGAAGALPPVVAWAAATG, LLLFLIIFFWTPPHFWALALF, ILLYTIVLVAIAAAPWPLGYF, WVYGVTSLILGAGMLVLAIEV, and LFAFSILYLFALFAVLLLDVV.

It belongs to the UbiA prenyltransferase family. Protoheme IX farnesyltransferase subfamily.

It is found in the cell inner membrane. The catalysed reaction is heme b + (2E,6E)-farnesyl diphosphate + H2O = Fe(II)-heme o + diphosphate. The protein operates within porphyrin-containing compound metabolism; heme O biosynthesis; heme O from protoheme: step 1/1. In terms of biological role, converts heme B (protoheme IX) to heme O by substitution of the vinyl group on carbon 2 of heme B porphyrin ring with a hydroxyethyl farnesyl side group. The chain is Protoheme IX farnesyltransferase 2 from Nitrobacter winogradskyi (strain ATCC 25391 / DSM 10237 / CIP 104748 / NCIMB 11846 / Nb-255).